Consider the following 466-residue polypeptide: MEYRIERDTMGEVRVPADKYWGAQTQRSLENFRIGTDRFRMPLEIIRAYGMLKKAAARANLELGELPEEIAKAIIQAAEEVVQGKWDDHFPLVVFQTGSGTQTNMNVNEVIANRASEILGKPLGSKYVHPNDHVNRGQSSNDTFPTAMYVAVALALHQRLYPAVEGLIRTFTAKAQAFDQIVKVGRTHLMDAVPITLGQEIGSWAAQLKTTLAAVKEMEKGLYNLAIGGTAVGTGLNAHPRFGELVAKYLAEETGLPFRVAENRFAALAAHDELVNVMGAIRTLAGALMKIGNDVRWLASGPYAGIGEITIPANEPGSSIMPGKVNPTQVEALTMVVVRVYGNDHTVAFAGSQGNFQLNVYKPVMAYSTLESINLLADAVASFDAHLAQGIEPNLERIEEHLQKNPMLATALNKAIGYDKAAEIVKKALKEKKTLKQAALELGYLTEEEFDRIVVPMRLAKPHEGA.

Substrate-binding positions include 99-101 (SGT), 129-132 (HPND), 139-141 (SSN), and T187. The active-site Proton donor/acceptor is H188. Residue S318 is part of the active site. Residues S319 and 324 to 326 (KVN) contribute to the substrate site.

The protein belongs to the class-II fumarase/aspartase family. Fumarase subfamily. As to quaternary structure, homotetramer.

The protein resides in the cytoplasm. It carries out the reaction (S)-malate = fumarate + H2O. The protein operates within carbohydrate metabolism; tricarboxylic acid cycle; (S)-malate from fumarate: step 1/1. Its function is as follows. Involved in the TCA cycle. Catalyzes the stereospecific interconversion of fumarate to L-malate. The chain is Fumarate hydratase class II from Thermus thermophilus (strain ATCC BAA-163 / DSM 7039 / HB27).